Here is a 1755-residue protein sequence, read N- to C-terminus: Transposon Ty1-ER2 Gag-Pol polyprotein (1755 aa).

3 stretches are compositionally biased toward polar residues: residues 1-10, 48-60, and 127-152; these read MESQQLSNYP, TKAN…TPAS, and QSQF…GNTF. Disordered stretches follow at residues 1-93, 126-173, and 352-421; these read MESQ…MMTQ, PQSQ…RPPP, and GSRN…SKST. The segment covering 153–165 has biased composition (low complexity); that stretch reads TDSSSADSDMTST. Residues 299–401 are RNA-binding; sequence NNGIHINNKV…NSKSKTARAH (103 aa). Low complexity predominate over residues 402–418; the sequence is NVSTSNNSPSTDNDSIS. The For protease activity; shared with dimeric partner role is filled by aspartate 461. The segment at 583–640 is integrase-type zinc finger-like; that stretch reads NVHTSESTRKYPYPFIHRMLAHANAQTIRYSLKNNTITYFNESDVDWSSAIDYQCPDC. Residues 660-835 enclose the Integrase catalytic domain; that stretch reads NSYEPFQYLH…AGLDISTLLP (176 aa). The Mg(2+) site is built by aspartate 671 and aspartate 736. The disordered stretch occupies residues 958 to 1170; the sequence is AVSPTDSTPP…SSLGGIGDSN (213 aa). The span at 960–969 shows a compositional bias: low complexity; sequence SPTDSTPPST. A compositionally biased stretch (polar residues) spans 1005-1015; it reads STPQISDIEST. A compositionally biased stretch (basic and acidic residues) spans 1038-1053; that stretch reads ESSHASKSKDFRHSDS. 2 stretches are compositionally biased toward polar residues: residues 1054–1082 and 1095–1106; these read YSDN…QTSE and SIDTSSSESNSL. The short motif at 1178–1212 is the Bipartite nuclear localization signal element; sequence KKRSLEDNETEIKVSRDTWNTKNMRSLEPPRSKKR. The Reverse transcriptase Ty1/copia-type domain occupies 1338–1476; sequence NNYYITQLDI…DILGLEIKYQ (139 aa). Mg(2+)-binding residues include aspartate 1346, aspartate 1427, aspartate 1428, aspartate 1610, glutamate 1652, and aspartate 1685. The 143-residue stretch at 1610–1752 folds into the RNase H Ty1/copia-type domain; that stretch reads DASYGNQPYY…IKTFKLLTNK (143 aa).

The capsid protein forms a homotrimer, from which the VLPs are assembled. The protease is a homodimer, whose active site consists of two apposed aspartic acid residues. Initially, virus-like particles (VLPs) are composed of the structural unprocessed proteins Gag and Gag-Pol, and also contain the host initiator methionine tRNA (tRNA(i)-Met) which serves as a primer for minus-strand DNA synthesis, and a dimer of genomic Ty RNA. Processing of the polyproteins occurs within the particle and proceeds by an ordered pathway, called maturation. First, the protease (PR) is released by autocatalytic cleavage of the Gag-Pol polyprotein yielding capsid protein p45 and a Pol-p154 precursor protein. This cleavage is a prerequisite for subsequent processing of Pol-p154 at the remaining sites to release the mature structural and catalytic proteins. Maturation takes place prior to the RT reaction and is required to produce transposition-competent VLPs.

Its subcellular location is the cytoplasm. It is found in the nucleus. It carries out the reaction DNA(n) + a 2'-deoxyribonucleoside 5'-triphosphate = DNA(n+1) + diphosphate. The catalysed reaction is Endonucleolytic cleavage to 5'-phosphomonoester.. Functionally, capsid protein (CA) is the structural component of the virus-like particle (VLP), forming the shell that encapsulates the retrotransposons dimeric RNA genome. The particles are assembled from trimer-clustered units and there are holes in the capsid shells that allow for the diffusion of macromolecules. CA also has nucleocapsid-like chaperone activity, promoting primer tRNA(i)-Met annealing to the multipartite primer-binding site (PBS), dimerization of Ty1 RNA and initiation of reverse transcription. The aspartyl protease (PR) mediates the proteolytic cleavages of the Gag and Gag-Pol polyproteins after assembly of the VLP. In terms of biological role, reverse transcriptase/ribonuclease H (RT) is a multifunctional enzyme that catalyzes the conversion of the retro-elements RNA genome into dsDNA within the VLP. The enzyme displays a DNA polymerase activity that can copy either DNA or RNA templates, and a ribonuclease H (RNase H) activity that cleaves the RNA strand of RNA-DNA heteroduplexes during plus-strand synthesis and hydrolyzes RNA primers. The conversion leads to a linear dsDNA copy of the retrotransposon that includes long terminal repeats (LTRs) at both ends. Its function is as follows. Integrase (IN) targets the VLP to the nucleus, where a subparticle preintegration complex (PIC) containing at least integrase and the newly synthesized dsDNA copy of the retrotransposon must transit the nuclear membrane. Once in the nucleus, integrase performs the integration of the dsDNA into the host genome. The protein is Transposon Ty1-ER2 Gag-Pol polyprotein (TY1B-ER2) of Saccharomyces cerevisiae (strain ATCC 204508 / S288c) (Baker's yeast).